A 391-amino-acid polypeptide reads, in one-letter code: GATA-binding factor 6-A (391 aa).

The segment at 57-111 (GAHSVNSHWSQATSESSSFNNSSPHTSSRYHYPPSPPMHNGSTRDTGYSSSLTVS) is disordered. Low complexity predominate over residues 66–83 (SQATSESSSFNNSSPHTS). Residues 96–111 (NGSTRDTGYSSSLTVS) are compositionally biased toward polar residues. 2 GATA-type zinc fingers span residues 182 to 206 (CVNCGSVQTPLWRRDGTGHFLCNAC) and 236 to 260 (CANCHTSTTTLWRRNTEGEPVCNAC). The segment at 274–355 (AMKKEGIQTR…TESTSPNSNT (82 aa)) is disordered. Positions 282–291 (TRKRKPKTLN) are enriched in basic residues. Residues 292–319 (KSKSSSSNGNSSHQISMTPTSTTSSTNS) show a composition bias toward low complexity. The span at 326-355 (GSPSQNTTPVVASSLMSTQQTESTSPNSNT) shows a compositional bias: polar residues.

As to expression, in embryos, expressed in the presumptive heart mesoderm. In adults, expressed at high levels in heart, small intestine, and stomach and at lower levels in lung, pancreas and colon.

Its subcellular location is the nucleus. In terms of biological role, transcriptional activator that binds 5'-GATA-3'-containing motifs within gene promoters. Regulates cardiac-specific transcription during embryogenesis and thereby cardiogenesis. The sequence is that of GATA-binding factor 6-A (gata6-a) from Xenopus laevis (African clawed frog).